Reading from the N-terminus, the 72-residue chain is SRY-related protein AES2 (72 aa).

Residues 1 to 69 (VKRPMNAFMV…KHMADYPDYK (69 aa)) constitute a DNA-binding region (HMG box).

Its subcellular location is the nucleus. In Alligator mississippiensis (American alligator), this protein is SRY-related protein AES2.